A 236-amino-acid polypeptide reads, in one-letter code: Leucyl/phenylalanyl-tRNA--protein transferase (236 aa).

The protein belongs to the L/F-transferase family.

It localises to the cytoplasm. The catalysed reaction is N-terminal L-lysyl-[protein] + L-leucyl-tRNA(Leu) = N-terminal L-leucyl-L-lysyl-[protein] + tRNA(Leu) + H(+). It carries out the reaction N-terminal L-arginyl-[protein] + L-leucyl-tRNA(Leu) = N-terminal L-leucyl-L-arginyl-[protein] + tRNA(Leu) + H(+). It catalyses the reaction L-phenylalanyl-tRNA(Phe) + an N-terminal L-alpha-aminoacyl-[protein] = an N-terminal L-phenylalanyl-L-alpha-aminoacyl-[protein] + tRNA(Phe). Its function is as follows. Functions in the N-end rule pathway of protein degradation where it conjugates Leu, Phe and, less efficiently, Met from aminoacyl-tRNAs to the N-termini of proteins containing an N-terminal arginine or lysine. The chain is Leucyl/phenylalanyl-tRNA--protein transferase from Vibrio campbellii (strain ATCC BAA-1116).